The following is a 599-amino-acid chain: Protein ECM25 (599 aa).

The Rho-GAP domain occupies 181–359; sequence NRLTPLAIRQ…NLLDFFPEIA (179 aa). Disordered regions lie at residues 362–447, 468–495, and 543–563; these read ISSP…PLPI, ASSSTDTLSSPTKTPSADSLPLSNSSTD, and ELQEKKKKNETTSKTADKFSQ. 3 stretches are compositionally biased toward low complexity: residues 363 to 373, 396 to 413, and 468 to 483; these read SSPPSSVSSSS, TLPRSRSPSPQRSVTSPT, and ASSSTDTLSSPTKTPS. Residues 543–562 show a composition bias toward basic and acidic residues; the sequence is ELQEKKKKNETTSKTADKFS.

The protein localises to the cytoplasm. Its function is as follows. May be involved in cell wall organization and biogenesis. The polypeptide is Protein ECM25 (ECM25) (Saccharomyces cerevisiae (strain ATCC 204508 / S288c) (Baker's yeast)).